The sequence spans 153 residues: Transcriptional repressor NrdR (153 aa).

Residues 1 to 22 form a disordered region; that stretch reads MRCPACHHNGTRVLDSRPAHEG. A zinc finger spans residues 3 to 34; that stretch reads CPACHHNGTRVLDSRPAHEGRSIRRRRECESC. The region spanning 49 to 139 is the ATP-cone domain; the sequence is LIVVKKDGTR…VYRQFKDINV (91 aa).

The protein belongs to the NrdR family. The cofactor is Zn(2+).

Its function is as follows. Negatively regulates transcription of bacterial ribonucleotide reductase nrd genes and operons by binding to NrdR-boxes. This Halalkalibacterium halodurans (strain ATCC BAA-125 / DSM 18197 / FERM 7344 / JCM 9153 / C-125) (Bacillus halodurans) protein is Transcriptional repressor NrdR.